The following is a 336-amino-acid chain: DNA-directed RNA polymerase subunit alpha (336 aa).

The alpha N-terminal domain (alpha-NTD) stretch occupies residues 1–233; sequence MSSNSFLTPR…EQFSFFADLE (233 aa). The alpha C-terminal domain (alpha-CTD) stretch occupies residues 247 to 336; that stretch reads IDPILLRPVD…YIKEPGHASS (90 aa).

Belongs to the RNA polymerase alpha chain family. Homodimer. The RNAP catalytic core consists of 2 alpha, 1 beta, 1 beta' and 1 omega subunit. When a sigma factor is associated with the core the holoenzyme is formed, which can initiate transcription.

It carries out the reaction RNA(n) + a ribonucleoside 5'-triphosphate = RNA(n+1) + diphosphate. In terms of biological role, DNA-dependent RNA polymerase catalyzes the transcription of DNA into RNA using the four ribonucleoside triphosphates as substrates. The sequence is that of DNA-directed RNA polymerase subunit alpha from Nitrosomonas europaea (strain ATCC 19718 / CIP 103999 / KCTC 2705 / NBRC 14298).